A 142-amino-acid polypeptide reads, in one-letter code: Small heat shock protein IbpB (142 aa).

Positions 26-137 (TAEHQAFPPY…APQRIAISDR (112 aa)) constitute a sHSP domain.

This sequence belongs to the small heat shock protein (HSP20) family. Homodimer. Forms homomultimers of about 100-150 subunits at optimal growth temperatures. Conformation changes to oligomers at high temperatures or high ionic concentrations. The decrease in size of the multimers is accompanied by an increase in chaperone activity.

Its subcellular location is the cytoplasm. In terms of biological role, associates with aggregated proteins, together with IbpA, to stabilize and protect them from irreversible denaturation and extensive proteolysis during heat shock and oxidative stress. Aggregated proteins bound to the IbpAB complex are more efficiently refolded and reactivated by the ATP-dependent chaperone systems ClpB and DnaK/DnaJ/GrpE. Its activity is ATP-independent. This chain is Small heat shock protein IbpB, found in Enterobacter sp. (strain 638).